We begin with the raw amino-acid sequence, 495 residues long: ATP synthase subunit beta, chloroplastic (495 aa).

ATP is bound at residue 172–179 (GGAGVGKT).

This sequence belongs to the ATPase alpha/beta chains family. In terms of assembly, F-type ATPases have 2 components, CF(1) - the catalytic core - and CF(0) - the membrane proton channel. CF(1) has five subunits: alpha(3), beta(3), gamma(1), delta(1), epsilon(1). CF(0) has four main subunits: a(1), b(1), b'(1) and c(9-12).

The protein resides in the plastid. Its subcellular location is the chloroplast thylakoid membrane. It catalyses the reaction ATP + H2O + 4 H(+)(in) = ADP + phosphate + 5 H(+)(out). Functionally, produces ATP from ADP in the presence of a proton gradient across the membrane. The catalytic sites are hosted primarily by the beta subunits. This Pseudogaltonia clavata (Cape hyacinth) protein is ATP synthase subunit beta, chloroplastic.